Consider the following 358-residue polypeptide: Ribosomal RNA-processing protein 8 (358 aa).

The segment at 1-81 (MKPFEVPPWE…PQDSSDDDYE (81 aa)) is disordered. The segment covering 30–44 (AKKKPKKKKPKKKKA) has biased composition (basic residues). Ser75 and Ser76 each carry phosphoserine. Positions 185, 220, 238, and 267 each coordinate S-adenosyl-L-methionine.

This sequence belongs to the methyltransferase superfamily. RRP8 family.

It is found in the nucleus. Its subcellular location is the nucleolus. Probable methyltransferase required to silence rDNA. The polypeptide is Ribosomal RNA-processing protein 8 (Drosophila melanogaster (Fruit fly)).